A 109-amino-acid chain; its full sequence is Antifungal protein ginkbilobin-like protein (109 aa).

One can recognise a Gnk2-homologous domain in the interval 4–109 (TNFVSSACNT…CFIQYEQHSF (106 aa)). Intrachain disulfides connect cysteine 11–cysteine 87, cysteine 63–cysteine 72, and cysteine 75–cysteine 100. Residue asparagine 12 participates in alpha-D-mannopyranose binding. 2 residues coordinate alpha-D-mannopyranose: arginine 94 and glutamate 105.

Its function is as follows. Exerts antifungal activity through its carbohydrate-binding specificity. The chain is Antifungal protein ginkbilobin-like protein from Picea abies (Norway spruce).